The chain runs to 452 residues: La-related protein 1B (452 aa).

Residues 1 to 22 show a composition bias toward low complexity; it reads MATTASSAANSASRFSIDSSIS. The disordered stretch occupies residues 1-251; that stretch reads MATTASSAAN…GFSHRNYSGR (251 aa). Ala-2 carries the N-acetylalanine modification. The span at 44-68 shows a compositional bias: polar residues; the sequence is LSLSQDDPFSAPSVSPPTGNNSSDY. Composition is skewed to low complexity over residues 99 to 117, 136 to 163, 171 to 185, and 206 to 223; these read SWPA…SPSL, ATSN…VNNS, NNNT…NVSN, and SGNF…SYPR. Basic and acidic residues predominate over residues 225–236; sequence EGLHHGNRRNYE. Polar residues predominate over residues 237–247; it reads HGNQSGFSHRN. In terms of domain architecture, HTH La-type RNA-binding spans 328 to 417; the sequence is RNFDAILYNK…RGDWDKYLLP (90 aa). The tract at residues 419 to 452 is disordered; it reads EPSRSGPAAGASNNASLVSQIESMTLSERSREGV. Residues 422 to 434 are compositionally biased toward low complexity; it reads RSGPAAGASNNAS. Polar residues predominate over residues 435 to 445; that stretch reads LVSQIESMTLS.

It belongs to the LARP family.

Its subcellular location is the cytoplasm. Its function is as follows. Promotes leaf senescence. This is La-related protein 1B (LARP1B) from Arabidopsis thaliana (Mouse-ear cress).